The following is a 469-amino-acid chain: DNA-binding transcriptional regulator NtrC (469 aa).

Positions 5-119 constitute a Response regulatory domain; the sequence is IVWVVDDDSS…EAVALVERAI (115 aa). Asp-54 is modified (4-aspartylphosphate). A Sigma-54 factor interaction domain is found at 140 to 369; that stretch reads IIGEAPAMQD…LENTCRWLTV (230 aa). ATP-binding positions include 168-175 and 231-240; these read GESGTGKE and ADGGTLFLDE. The segment at residues 445-464 is a DNA-binding region (H-T-H motif); that stretch reads KQEAARLLGWGRNTLTRKLK.

In terms of processing, phosphorylated and dephosphorylated by NtrB.

The protein resides in the cytoplasm. Its function is as follows. Member of the two-component regulatory system NtrB/NtrC, which controls expression of the nitrogen-regulated (ntr) genes in response to nitrogen limitation. Phosphorylated NtrC binds directly to DNA and stimulates the formation of open promoter-sigma54-RNA polymerase complexes. This chain is DNA-binding transcriptional regulator NtrC (glnG), found in Escherichia coli O157:H7.